The following is a 392-amino-acid chain: p21-activated protein kinase-interacting protein 1 (392 aa).

WD repeat units follow at residues 40–77 (AHTA…DHGA), 80–118 (HHNG…CLKS), 121–160 (AHKG…SAFI), 202–240 (TNER…CLSE), and 243–284 (AHEN…KVSP). Positions 309-392 (TKESPPAAAE…RKKKKIRMMQ (84 aa)) are disordered. Positions 325 to 351 (EQSRRNKEESGHAVQEEEKQPKPDTEK) are enriched in basic and acidic residues. The span at 355–368 (TGDSNKPTRGNSLV) shows a compositional bias: polar residues. Over residues 381-392 (KKRKKKKIRMMQ) the composition is skewed to basic residues.

In terms of assembly, interacts with PAK1.

The protein resides in the nucleus. Its subcellular location is the nucleolus. Functionally, negatively regulates the PAK1 kinase. PAK1 is a member of the PAK kinase family, which has been shown to play a positive role in the regulation of signaling pathways involving MAPK8 and RELA. PAK1 exists as an inactive homodimer, which is activated by binding of small GTPases such as CDC42 to an N-terminal regulatory domain. PAK1IP1 also binds to the N-terminus of PAK1, and inhibits the specific activation of PAK1 by CDC42. May be involved in ribosomal large subunit assembly. The protein is p21-activated protein kinase-interacting protein 1 (PAK1IP1) of Bos taurus (Bovine).